The primary structure comprises 200 residues: Recombination protein RecR (200 aa).

The C4-type zinc-finger motif lies at 57 to 72 (CRQCRTLTEEELCPQC). Positions 80–175 (TLLCVVEGPM…ITSRIAHGVP (96 aa)) constitute a Toprim domain.

The protein belongs to the RecR family.

May play a role in DNA repair. It seems to be involved in an RecBC-independent recombinational process of DNA repair. It may act with RecF and RecO. The sequence is that of Recombination protein RecR from Pseudomonas fluorescens (strain SBW25).